Here is a 275-residue protein sequence, read N- to C-terminus: Lectin 8 (275 aa).

Positions methionine 1–serine 31 are cleaved as a signal peptide. 2 N-linked (GlcNAc...) asparagine glycosylation sites follow: asparagine 55 and asparagine 150.

The protein belongs to the leguminous lectin family.

Functionally, may be involved in arbuscular mycorrhizal (AM) symbiosis with AM fungi. The polypeptide is Lectin 8 (Medicago truncatula (Barrel medic)).